The sequence spans 578 residues: Cyclin-SDS (578 aa).

Residues 1-31 are disordered; that stretch reads MKEIAMRNSKRKPEPTPFAGKKLRSTRLRRK. A compositionally biased stretch (basic residues) spans 21-31; the sequence is KKLRSTRLRRK.

Belongs to the cyclin family. In terms of assembly, may interact with CDKA-1 and CDKB1-1.

Meiosis-specific cyclin. Required for normal homolog synapsis and recombination in early to mid-prophase 1. May regulate the timing of sister chromatid separation. This is Cyclin-SDS (SDS) from Arabidopsis thaliana (Mouse-ear cress).